The sequence spans 107 residues: Nitrogenase-stabilizing/protective protein NifW (107 aa).

Belongs to the NifW family. In terms of assembly, homotrimer; associates with NifD.

In terms of biological role, may protect the nitrogenase Fe-Mo protein from oxidative damage. The protein is Nitrogenase-stabilizing/protective protein NifW of Gloeothece citriformis (strain PCC 7424) (Cyanothece sp. (strain PCC 7424)).